We begin with the raw amino-acid sequence, 304 residues long: UDP-3-O-acyl-N-acetylglucosamine deacetylase (304 aa).

The Zn(2+) site is built by histidine 78, histidine 237, and aspartate 241. The active-site Proton donor is the histidine 264.

This sequence belongs to the LpxC family. Zn(2+) serves as cofactor.

The catalysed reaction is a UDP-3-O-[(3R)-3-hydroxyacyl]-N-acetyl-alpha-D-glucosamine + H2O = a UDP-3-O-[(3R)-3-hydroxyacyl]-alpha-D-glucosamine + acetate. The protein operates within glycolipid biosynthesis; lipid IV(A) biosynthesis; lipid IV(A) from (3R)-3-hydroxytetradecanoyl-[acyl-carrier-protein] and UDP-N-acetyl-alpha-D-glucosamine: step 2/6. In terms of biological role, catalyzes the hydrolysis of UDP-3-O-myristoyl-N-acetylglucosamine to form UDP-3-O-myristoylglucosamine and acetate, the committed step in lipid A biosynthesis. The sequence is that of UDP-3-O-acyl-N-acetylglucosamine deacetylase from Nitrosococcus oceani (strain ATCC 19707 / BCRC 17464 / JCM 30415 / NCIMB 11848 / C-107).